We begin with the raw amino-acid sequence, 308 residues long: Transaldolase (308 aa).

K125 acts as the Schiff-base intermediate with substrate in catalysis.

It belongs to the transaldolase family. Type 1 subfamily. As to quaternary structure, homodimer.

It is found in the cytoplasm. It carries out the reaction D-sedoheptulose 7-phosphate + D-glyceraldehyde 3-phosphate = D-erythrose 4-phosphate + beta-D-fructose 6-phosphate. It functions in the pathway carbohydrate degradation; pentose phosphate pathway; D-glyceraldehyde 3-phosphate and beta-D-fructose 6-phosphate from D-ribose 5-phosphate and D-xylulose 5-phosphate (non-oxidative stage): step 2/3. Its function is as follows. Transaldolase is important for the balance of metabolites in the pentose-phosphate pathway. In Pseudomonas putida (strain W619), this protein is Transaldolase.